The following is a 147-amino-acid chain: Hemoglobin subunit beta (147 aa).

V2 bears the N-acetylvaline mark. Residues 3–147 (HLTAEEKSAV…VANALAHKYH (145 aa)) form the Globin domain. T13 carries the phosphothreonine modification. At S45 the chain carries Phosphoserine. Position 60 is an N6-acetyllysine (K60). H64 is a heme b binding site. K83 is subject to N6-acetyllysine. H93 contributes to the heme b binding site. C94 is subject to S-nitrosocysteine. K145 is subject to N6-acetyllysine.

The protein belongs to the globin family. In terms of assembly, heterotetramer of two alpha chains and two beta chains. In terms of tissue distribution, red blood cells.

In terms of biological role, involved in oxygen transport from the lung to the various peripheral tissues. The protein is Hemoglobin subunit beta (HBB) of Sapajus apella (Brown-capped capuchin).